Consider the following 410-residue polypeptide: Argininosuccinate synthase (410 aa).

ATP contacts are provided by residues 14 to 22 (AYSGGLDTS) and alanine 41. L-citrulline is bound by residues tyrosine 92 and serine 97. Glycine 122 provides a ligand contact to ATP. L-aspartate is bound by residues threonine 124, asparagine 128, and aspartate 129. Asparagine 128 is an L-citrulline binding site. Positions 132, 183, 192, 268, and 280 each coordinate L-citrulline.

It belongs to the argininosuccinate synthase family. Type 1 subfamily. Homotetramer.

It localises to the cytoplasm. The enzyme catalyses L-citrulline + L-aspartate + ATP = 2-(N(omega)-L-arginino)succinate + AMP + diphosphate + H(+). It functions in the pathway amino-acid biosynthesis; L-arginine biosynthesis; L-arginine from L-ornithine and carbamoyl phosphate: step 2/3. The polypeptide is Argininosuccinate synthase (Parvibaculum lavamentivorans (strain DS-1 / DSM 13023 / NCIMB 13966)).